The sequence spans 228 residues: Cytochrome c oxidase subunit 2 (228 aa).

Topologically, residues 1–26 (MSTWANLGLQDSASPLMEQLIFFHDH) are mitochondrial intermembrane. Residues 27 to 48 (ALLILVMITVLVGYLMFMLFFN) traverse the membrane as a helical segment. Over 49–62 (NYVNRFLLHGQLIE) the chain is Mitochondrial matrix. Residues 63–82 (MIWTILPAIILLFIALPSLR) form a helical membrane-spanning segment. Over 83–228 (LLYLLDEINE…FIKWISSNNS (146 aa)) the chain is Mitochondrial intermembrane. Cu cation-binding residues include His-161, Cys-196, Glu-198, Cys-200, His-204, and Met-207. Residue Glu-198 coordinates Mg(2+).

Belongs to the cytochrome c oxidase subunit 2 family. In terms of assembly, component of the cytochrome c oxidase (complex IV, CIV), a multisubunit enzyme composed of a catalytic core of 3 subunits and several supernumerary subunits. The complex exists as a monomer or a dimer and forms supercomplexes (SCs) in the inner mitochondrial membrane with ubiquinol-cytochrome c oxidoreductase (cytochrome b-c1 complex, complex III, CIII). The cofactor is Cu cation.

The protein localises to the mitochondrion inner membrane. The enzyme catalyses 4 Fe(II)-[cytochrome c] + O2 + 8 H(+)(in) = 4 Fe(III)-[cytochrome c] + 2 H2O + 4 H(+)(out). Its function is as follows. Component of the cytochrome c oxidase, the last enzyme in the mitochondrial electron transport chain which drives oxidative phosphorylation. The respiratory chain contains 3 multisubunit complexes succinate dehydrogenase (complex II, CII), ubiquinol-cytochrome c oxidoreductase (cytochrome b-c1 complex, complex III, CIII) and cytochrome c oxidase (complex IV, CIV), that cooperate to transfer electrons derived from NADH and succinate to molecular oxygen, creating an electrochemical gradient over the inner membrane that drives transmembrane transport and the ATP synthase. Cytochrome c oxidase is the component of the respiratory chain that catalyzes the reduction of oxygen to water. Electrons originating from reduced cytochrome c in the intermembrane space (IMS) are transferred via the dinuclear copper A center (CU(A)) of subunit 2 and heme A of subunit 1 to the active site in subunit 1, a binuclear center (BNC) formed by heme A3 and copper B (CU(B)). The BNC reduces molecular oxygen to 2 water molecules using 4 electrons from cytochrome c in the IMS and 4 protons from the mitochondrial matrix. The protein is Cytochrome c oxidase subunit 2 (mt:CoII) of Drosophila simulans (Fruit fly).